The following is a 192-amino-acid chain: Glycerol-3-phosphate acyltransferase (192 aa).

Helical transmembrane passes span 4-24 (FAII…DVVI), 48-68 (LVLV…WVGY), 74-94 (YFEL…PIFF), 101-121 (GVAT…GSML), and 125-145 (LLIF…ALIL).

The protein belongs to the PlsY family. As to quaternary structure, probably interacts with PlsX.

It localises to the cell inner membrane. It catalyses the reaction an acyl phosphate + sn-glycerol 3-phosphate = a 1-acyl-sn-glycero-3-phosphate + phosphate. Its pathway is lipid metabolism; phospholipid metabolism. Its function is as follows. Catalyzes the transfer of an acyl group from acyl-phosphate (acyl-PO(4)) to glycerol-3-phosphate (G3P) to form lysophosphatidic acid (LPA). This enzyme utilizes acyl-phosphate as fatty acyl donor, but not acyl-CoA or acyl-ACP. The sequence is that of Glycerol-3-phosphate acyltransferase from Histophilus somni (strain 129Pt) (Haemophilus somnus).